The following is a 270-amino-acid chain: Hydroxyethylthiazole kinase (270 aa).

M47 lines the substrate pocket. Residues R123 and T169 each contribute to the ATP site. G196 is a binding site for substrate.

The protein belongs to the Thz kinase family. The cofactor is Mg(2+).

The catalysed reaction is 5-(2-hydroxyethyl)-4-methylthiazole + ATP = 4-methyl-5-(2-phosphooxyethyl)-thiazole + ADP + H(+). It functions in the pathway cofactor biosynthesis; thiamine diphosphate biosynthesis; 4-methyl-5-(2-phosphoethyl)-thiazole from 5-(2-hydroxyethyl)-4-methylthiazole: step 1/1. In terms of biological role, catalyzes the phosphorylation of the hydroxyl group of 4-methyl-5-beta-hydroxyethylthiazole (THZ). The protein is Hydroxyethylthiazole kinase of Roseiflexus castenholzii (strain DSM 13941 / HLO8).